A 568-amino-acid chain; its full sequence is Potassium-transporting ATPase potassium-binding subunit (568 aa).

The next 12 membrane-spanning stretches (helical) occupy residues 7–27 (ITIGIFFLCVLALTRPLGGFL), 65–85 (HYALALLSFKIVCFVAVYAIL), 136–156 (GLTVQNFVSAAAGIAVAAAII), 179–199 (LYVLLPISVVLSLFYVFEGIP), 254–274 (LTNFVEMISIFAIGAGLTNVF), 285–305 (WAVFSAMSVLFFVGVTAVYWA), 332–352 (FGVAASALFAAVTTDASCGAV), 354–374 (AMHESFLPLGGMVPLINMMLG), 377–397 (IIGGVGAGLYGFILFAIIAVF), 423–443 (MLAVLCLPLVMLGFTAVAVVV), 487–507 (ITLGIGMMIGRFFVIVPALAI), and 530–550 (LFIGLVAGVIIIVGGLTFLPA).

The protein belongs to the KdpA family. As to quaternary structure, the system is composed of three essential subunits: KdpA, KdpB and KdpC.

It is found in the cell inner membrane. Its function is as follows. Part of the high-affinity ATP-driven potassium transport (or Kdp) system, which catalyzes the hydrolysis of ATP coupled with the electrogenic transport of potassium into the cytoplasm. This subunit binds the periplasmic potassium ions and delivers the ions to the membrane domain of KdpB through an intramembrane tunnel. This chain is Potassium-transporting ATPase potassium-binding subunit, found in Granulibacter bethesdensis (strain ATCC BAA-1260 / CGDNIH1).